The primary structure comprises 1308 residues: Tau-tubulin kinase 1 (1308 aa).

The 264-residue stretch at 34-297 (WKVLKKIGGG…LIMSVFENSM (264 aa)) folds into the Protein kinase domain. ATP is bound by residues 40-48 (IGGGGFGEI) and K63. D154 acts as the Proton acceptor in catalysis. Disordered regions lie at residues 364-397 (LSDQ…GPEA), 418-448 (PCVE…PVRS), 474-671 (ERRS…APPF), 720-899 (QVPL…AGGG), 985-1085 (EMES…LARL), and 1097-1308 (RLAS…PGAR). S441 carries the post-translational modification Phosphoserine. The segment covering 485-496 (PSRQACSSQPAQ) has biased composition (polar residues). S541 is subject to Phosphoserine. 2 stretches are compositionally biased toward basic and acidic residues: residues 541 to 555 (SKEW…ELKD) and 574 to 589 (ELRP…RRLG). Over residues 638-647 (SPSHSPLHSG) the composition is skewed to low complexity. Residues 735-769 (GEEEEEEEEEEEEEEEEEEEEEEEEEEEEEEEEEA) are compositionally biased toward acidic residues. Basic and acidic residues predominate over residues 786–795 (GSERSTERSQ). Composition is skewed to polar residues over residues 868 to 885 (PTGS…SSIL) and 1020 to 1035 (ASQQ…TISP). Positions 1097-1107 (RLASGASSSSS) are enriched in low complexity.

Belongs to the protein kinase superfamily. CK1 Ser/Thr protein kinase family. Mg(2+) serves as cofactor. Mn(2+) is required as a cofactor. Expressed in the brain. Strong expression in the cortical layers, the CA1 layers of the hippocampus and the granular layer of the cerebellum. Also expressed in the large cortical pyramidal cells in the temporal cortex, the CA1 pyramidal neurons and the cerebellum granular neurons.

The protein localises to the cytoplasm. It carries out the reaction L-seryl-[protein] + ATP = O-phospho-L-seryl-[protein] + ADP + H(+). The catalysed reaction is L-threonyl-[protein] + ATP = O-phospho-L-threonyl-[protein] + ADP + H(+). In terms of biological role, serine/threonine kinase which is able to phosphorylate TAU on serine, threonine and tyrosine residues. Induces aggregation of TAU. The polypeptide is Tau-tubulin kinase 1 (Ttbk1) (Mus musculus (Mouse)).